A 608-amino-acid polypeptide reads, in one-letter code: RAS guanyl-releasing protein 2 (608 aa).

One can recognise an N-terminal Ras-GEF domain in the interval 4 to 126 (TLDLDKGCTV…SLIDIENVPT (123 aa)). 3 positions are modified to phosphoserine: Ser116, Ser117, and Ser147. The 234-residue stretch at 154-387 (EPLELAAHLT…YQLSLQREPR (234 aa)) folds into the Ras-GEF domain. The tract at residues 382–407 (LQREPRSKSSPTSPTTCTPPPRPPVL) is disordered. EF-hand domains lie at 426-461 (HIEKMVESVFRNFDVDGDGHISQEEFQIIRGNFPYL) and 463-490 (AFGDLDQNQDGCISKEEMVSYFLRSSSM). Positions 439, 441, 443, 445, 450, 468, 470, 472, 474, and 479 each coordinate Ca(2+). The segment at 498 to 548 (VHNFHESNSLRPVACRHCKALILGIYKQGLKCRACGVNCHKQCKDRLSVEC) adopts a Phorbol-ester/DAG-type zinc-finger fold. Residues Ser554 and Ser575 each carry the phosphoserine modification. Positions 556 to 591 (SLEGSAPSPSPTHTHHRAFSFSLPRPGRRGSRPPEI) are disordered.

Belongs to the RASGRP family. In terms of assembly, forms a signaling complex with RAP1 and BRAF. Interacts with RAP1. Interacts with F-actin.

The protein resides in the cytoplasm. It localises to the cytosol. Its subcellular location is the cell membrane. It is found in the synapse. The protein localises to the synaptosome. The protein resides in the cell projection. It localises to the ruffle membrane. In terms of biological role, functions as a calcium- and DAG-regulated nucleotide exchange factor specifically activating Rap through the exchange of bound GDP for GTP. May also activate other GTPases such as RRAS, RRAS2, NRAS, KRAS but not HRAS. Functions in aggregation of platelets and adhesion of T-lymphocytes and neutrophils probably through inside-out integrin activation. May function in the muscarinic acetylcholine receptor M1/CHRM1 signaling pathway. The protein is RAS guanyl-releasing protein 2 (RASGRP2) of Bos taurus (Bovine).